The following is a 314-amino-acid chain: Homeobox protein knotted-1-like 3 (314 aa).

Positions 218 to 238 constitute an ELK domain; the sequence is ELKIELKQGFKSRIEDVREEI. Positions 239-302 form a DNA-binding region, homeobox; TALE-type; that stretch reads LRKRRAGKLP…NQRKRNWHNN (64 aa).

Belongs to the TALE/KNOX homeobox family. Isoform 1 is expressed in roots and flowers, and at lower levels in leaf blades and leaf sheaths. Isoform 2 is expressed in roots and flowers.

The protein localises to the nucleus. The sequence is that of Homeobox protein knotted-1-like 3 (HOS66) from Oryza sativa subsp. japonica (Rice).